A 427-amino-acid chain; its full sequence is Glutamate-1-semialdehyde 2,1-aminomutase (427 aa).

N6-(pyridoxal phosphate)lysine is present on K269.

It belongs to the class-III pyridoxal-phosphate-dependent aminotransferase family. HemL subfamily. As to quaternary structure, homodimer. It depends on pyridoxal 5'-phosphate as a cofactor.

It localises to the cytoplasm. It catalyses the reaction (S)-4-amino-5-oxopentanoate = 5-aminolevulinate. Its pathway is porphyrin-containing compound metabolism; protoporphyrin-IX biosynthesis; 5-aminolevulinate from L-glutamyl-tRNA(Glu): step 2/2. This is Glutamate-1-semialdehyde 2,1-aminomutase from Thermus thermophilus (strain ATCC BAA-163 / DSM 7039 / HB27).